The sequence spans 319 residues: Ribose-phosphate pyrophosphokinase (319 aa).

Residues 41–43 (NGE) and 100–101 (RQ) each bind ATP. 2 residues coordinate Mg(2+): H134 and D175. K198 is an active-site residue. D-ribose 5-phosphate is bound by residues R200, D224, and 228-232 (DTAGS).

It belongs to the ribose-phosphate pyrophosphokinase family. Class I subfamily. In terms of assembly, homohexamer. Requires Mg(2+) as cofactor.

Its subcellular location is the cytoplasm. It catalyses the reaction D-ribose 5-phosphate + ATP = 5-phospho-alpha-D-ribose 1-diphosphate + AMP + H(+). It functions in the pathway metabolic intermediate biosynthesis; 5-phospho-alpha-D-ribose 1-diphosphate biosynthesis; 5-phospho-alpha-D-ribose 1-diphosphate from D-ribose 5-phosphate (route I): step 1/1. Functionally, involved in the biosynthesis of the central metabolite phospho-alpha-D-ribosyl-1-pyrophosphate (PRPP) via the transfer of pyrophosphoryl group from ATP to 1-hydroxyl of ribose-5-phosphate (Rib-5-P). This Clostridium acetobutylicum (strain ATCC 824 / DSM 792 / JCM 1419 / IAM 19013 / LMG 5710 / NBRC 13948 / NRRL B-527 / VKM B-1787 / 2291 / W) protein is Ribose-phosphate pyrophosphokinase.